Consider the following 181-residue polypeptide: Macro domain-containing protein in sno 5'region (181 aa).

The region spanning 1–172 is the Macro domain; that stretch reads MTTITLVQGD…TFARELGDAG (172 aa).

Belongs to the MacroD-type family.

The sequence is that of Macro domain-containing protein in sno 5'region from Streptomyces nogalater.